The following is a 106-amino-acid chain: Pyrimidine/purine nucleoside phosphorylase (106 aa).

It belongs to the nucleoside phosphorylase PpnP family.

The enzyme catalyses a purine D-ribonucleoside + phosphate = a purine nucleobase + alpha-D-ribose 1-phosphate. The catalysed reaction is adenosine + phosphate = alpha-D-ribose 1-phosphate + adenine. It carries out the reaction cytidine + phosphate = cytosine + alpha-D-ribose 1-phosphate. It catalyses the reaction guanosine + phosphate = alpha-D-ribose 1-phosphate + guanine. The enzyme catalyses inosine + phosphate = alpha-D-ribose 1-phosphate + hypoxanthine. The catalysed reaction is thymidine + phosphate = 2-deoxy-alpha-D-ribose 1-phosphate + thymine. It carries out the reaction uridine + phosphate = alpha-D-ribose 1-phosphate + uracil. It catalyses the reaction xanthosine + phosphate = alpha-D-ribose 1-phosphate + xanthine. Catalyzes the phosphorolysis of diverse nucleosides, yielding D-ribose 1-phosphate and the respective free bases. Can use uridine, adenosine, guanosine, cytidine, thymidine, inosine and xanthosine as substrates. Also catalyzes the reverse reactions. The chain is Pyrimidine/purine nucleoside phosphorylase from Burkholderia ambifaria (strain MC40-6).